The sequence spans 291 residues: Presqualene diphosphate synthase (291 aa).

Residues 1–23 (MTSAMKKIQPEAFSEKSSDSQAS) form a disordered region.

This sequence belongs to the phytoene/squalene synthase family. HpnD subfamily.

It catalyses the reaction 2 (2E,6E)-farnesyl diphosphate = presqualene diphosphate + diphosphate. The protein operates within secondary metabolite biosynthesis; hopanoid biosynthesis. In terms of biological role, involved in the biosynthesis of the hopanoid precursor squalene (SQ) from farnesyl diphosphate (FPP). Catalyzes the first step, the formation of presqualene diphosphate (PSPP) from two molecules of FPP. In Zymomonas mobilis subsp. mobilis (strain ATCC 31821 / ZM4 / CP4), this protein is Presqualene diphosphate synthase.